A 153-amino-acid polypeptide reads, in one-letter code: Ribonuclease H (153 aa).

The RNase H type-1 domain maps to 1–141 (MKHVHIFTDG…ADELARKGME (141 aa)). Residues Asp-9, Glu-47, Asp-69, and Asp-133 each coordinate Mg(2+). The tract at residues 123-153 (HAGHPENERADELARKGMEPFKKARRADAVK) is disordered. Over residues 125 to 153 (GHPENERADELARKGMEPFKKARRADAVK) the composition is skewed to basic and acidic residues.

The protein belongs to the RNase H family. In terms of assembly, monomer. It depends on Mg(2+) as a cofactor.

It localises to the cytoplasm. The enzyme catalyses Endonucleolytic cleavage to 5'-phosphomonoester.. In terms of biological role, endonuclease that specifically degrades the RNA of RNA-DNA hybrids. This Rhizobium meliloti (strain 1021) (Ensifer meliloti) protein is Ribonuclease H.